The primary structure comprises 1120 residues: Mechanosensitive channel MscK (1120 aa).

An N-terminal signal peptide occupies residues 1–33 (MTMFQYYKRSRHFVFSAFIAFVFVLLCQNTAFA). Over 34-499 (RASSNGDLPT…MKITVNWQKA (466 aa)) the chain is Periplasmic. Coiled coils occupy residues 43–98 (TKAD…VAEA), 126–266 (STLS…TLTE), and 360–422 (DELE…RREL). The helical transmembrane segment at 500 to 520 (WPAVFIAFLAGLPLLLIAGLI) threads the bilayer. Over 521–560 (HWRLGWLKAYQQKLASAVGSLRNDSQLNTPKAILIDLIRA) the chain is Cytoplasmic. The chain crosses the membrane as a helical span at residues 561–581 (LPVCLIILAVGLILLTMQLNI). Residue S582 is a topological domain, periplasmic. Residues 583 to 603 (ELLWSFSKKLAIFWLVFGLCW) traverse the membrane as a helical segment. At 604-634 (KVLEKNGVAVRHFGMPEQQTSHWRRQIVRIS) the chain is on the cytoplasmic side. The chain crosses the membrane as a helical span at residues 635 to 655 (LALLPIHFWSVVAELSPLHLM). Topologically, residues 656-657 (DD) are periplasmic. Residues 658-678 (VLGQAMIFFNLLLIAFLVWPM) form a helical membrane-spanning segment. At 679–692 (CRESWRDKESHTMR) the chain is on the cytoplasmic side. The chain crosses the membrane as a helical span at residues 693 to 713 (LVTITVLSIIPIALMVLTATG). Topologically, residues 714–728 (YFYTTLRLAGRWIET) are periplasmic. A helical membrane pass occupies residues 729–749 (VYLVIIWNLLYQTVLRGLSVA). At 750 to 796 (ARRIAWRRALARRQNLVKEGAEGAEPPEEPTIALEQVNQQTLRITML) the chain is on the cytoplasmic side. A helical transmembrane segment spans residues 797–817 (LMFALFGVMFWAIWSDLITVF). Topologically, residues 818-839 (SYLDSITLWHYNGTEAGAAVVK) are periplasmic. Residues 840-860 (NVTMGSLLFAIIASMVAWALI) form a helical membrane-spanning segment. Residues 861-886 (RNLPGLLEVLVLSRLNMRQGASYAIT) lie on the Cytoplasmic side of the membrane. Residues 887-907 (TILNYIIIAVGAMTVFGSLGV) form a helical membrane-spanning segment. Residues 908–921 (SWDKLQWLAAALSV) are Periplasmic-facing. Residues 922-942 (GLGFGLQEIFGNFVSGLIILF) form a helical membrane-spanning segment. Residues 943–1120 (ERPVRIGDTV…KGDDPTPAVG (178 aa)) lie on the Cytoplasmic side of the membrane. A coiled-coil region spans residues 1057–1081 (YVRELRDRSRTVDELNRTIDQLCRE).

Belongs to the MscS (TC 1.A.23) family.

Its subcellular location is the cell inner membrane. Its function is as follows. Mechanosensitive channel that opens in response to membrane tension and specific ionic conditions. Requires high concentrations of external K(+), NH(4)(+), Rb(+) or Cs(+) to gate. May participate in the regulation of osmotic pressure changes within the cell, although it does not appear to have a major role in osmolarity regulation. Forms an ion channel of 1.0 nanosiemens conductance. The channel can remain active for between 30 seconds and over 3 minutes; it does not desensitize upon extended pressure. Its activity is masked in wild-type cells by the MscS channel. This is Mechanosensitive channel MscK (mscK) from Escherichia coli (strain K12).